The following is a 679-amino-acid chain: UvrABC system protein C (679 aa).

The region spanning N65 to V143 is the GIY-YIG domain. A UVR domain is found at Q253 to V288.

This sequence belongs to the UvrC family. As to quaternary structure, interacts with UvrB in an incision complex.

The protein resides in the cytoplasm. In terms of biological role, the UvrABC repair system catalyzes the recognition and processing of DNA lesions. UvrC both incises the 5' and 3' sides of the lesion. The N-terminal half is responsible for the 3' incision and the C-terminal half is responsible for the 5' incision. This chain is UvrABC system protein C, found in Rhizobium etli (strain ATCC 51251 / DSM 11541 / JCM 21823 / NBRC 15573 / CFN 42).